Reading from the N-terminus, the 393-residue chain is Probable hydrolase sll0100 (393 aa).

It belongs to the peptidase M20 family.

The chain is Probable hydrolase sll0100 from Synechocystis sp. (strain ATCC 27184 / PCC 6803 / Kazusa).